A 210-amino-acid polypeptide reads, in one-letter code: Thiamine-phosphate synthase (210 aa).

4-amino-2-methyl-5-(diphosphooxymethyl)pyrimidine-binding positions include 39 to 43 (QLREK) and asparagine 71. Mg(2+)-binding residues include aspartate 72 and aspartate 91. Serine 110 contributes to the 4-amino-2-methyl-5-(diphosphooxymethyl)pyrimidine binding site. 136 to 138 (TST) serves as a coordination point for 2-[(2R,5Z)-2-carboxy-4-methylthiazol-5(2H)-ylidene]ethyl phosphate. Lysine 139 provides a ligand contact to 4-amino-2-methyl-5-(diphosphooxymethyl)pyrimidine. 2-[(2R,5Z)-2-carboxy-4-methylthiazol-5(2H)-ylidene]ethyl phosphate is bound by residues glycine 166 and 186–187 (VS).

Belongs to the thiamine-phosphate synthase family. Requires Mg(2+) as cofactor.

The enzyme catalyses 2-[(2R,5Z)-2-carboxy-4-methylthiazol-5(2H)-ylidene]ethyl phosphate + 4-amino-2-methyl-5-(diphosphooxymethyl)pyrimidine + 2 H(+) = thiamine phosphate + CO2 + diphosphate. The catalysed reaction is 2-(2-carboxy-4-methylthiazol-5-yl)ethyl phosphate + 4-amino-2-methyl-5-(diphosphooxymethyl)pyrimidine + 2 H(+) = thiamine phosphate + CO2 + diphosphate. It catalyses the reaction 4-methyl-5-(2-phosphooxyethyl)-thiazole + 4-amino-2-methyl-5-(diphosphooxymethyl)pyrimidine + H(+) = thiamine phosphate + diphosphate. It participates in cofactor biosynthesis; thiamine diphosphate biosynthesis; thiamine phosphate from 4-amino-2-methyl-5-diphosphomethylpyrimidine and 4-methyl-5-(2-phosphoethyl)-thiazole: step 1/1. Functionally, condenses 4-methyl-5-(beta-hydroxyethyl)thiazole monophosphate (THZ-P) and 2-methyl-4-amino-5-hydroxymethyl pyrimidine pyrophosphate (HMP-PP) to form thiamine monophosphate (TMP). The sequence is that of Thiamine-phosphate synthase from Ruminiclostridium cellulolyticum (strain ATCC 35319 / DSM 5812 / JCM 6584 / H10) (Clostridium cellulolyticum).